Consider the following 725-residue polypeptide: Catalase-peroxidase (725 aa).

The tryptophyl-tyrosyl-methioninium (Trp-Tyr) (with M-237) cross-link spans 88–211; it reads WHSAGTYRIQ…LAASEMGLIY (124 aa). The active-site Proton acceptor is the histidine 89. The segment at residues 211 to 237 is a cross-link (tryptophyl-tyrosyl-methioninium (Tyr-Met) (with W-88)); it reads YVNPEGPGREPDPLKAAQQIRETFKRM. Position 252 (histidine 252) interacts with heme b.

It belongs to the peroxidase family. Peroxidase/catalase subfamily. As to quaternary structure, homodimer or homotetramer. It depends on heme b as a cofactor. Post-translationally, formation of the three residue Trp-Tyr-Met cross-link is important for the catalase, but not the peroxidase activity of the enzyme.

The catalysed reaction is H2O2 + AH2 = A + 2 H2O. It carries out the reaction 2 H2O2 = O2 + 2 H2O. In terms of biological role, bifunctional enzyme with both catalase and broad-spectrum peroxidase activity. The chain is Catalase-peroxidase from Symbiobacterium thermophilum (strain DSM 24528 / JCM 14929 / IAM 14863 / T).